Reading from the N-terminus, the 397-residue chain is Succinate--CoA ligase [ADP-forming] subunit beta (397 aa).

In terms of domain architecture, ATP-grasp spans 9–254; sequence KELLRGYGAP…TSEEDEKEIE (246 aa). Residues K46, 53–55, E109, A112, and E117 each bind ATP; that span reads GRG. Positions 209 and 223 each coordinate Mg(2+). Substrate-binding positions include N274 and 331-333; that span reads GIM.

The protein belongs to the succinate/malate CoA ligase beta subunit family. In terms of assembly, heterotetramer of two alpha and two beta subunits. Requires Mg(2+) as cofactor.

The catalysed reaction is succinate + ATP + CoA = succinyl-CoA + ADP + phosphate. It carries out the reaction GTP + succinate + CoA = succinyl-CoA + GDP + phosphate. It functions in the pathway carbohydrate metabolism; tricarboxylic acid cycle; succinate from succinyl-CoA (ligase route): step 1/1. Its function is as follows. Succinyl-CoA synthetase functions in the citric acid cycle (TCA), coupling the hydrolysis of succinyl-CoA to the synthesis of either ATP or GTP and thus represents the only step of substrate-level phosphorylation in the TCA. The beta subunit provides nucleotide specificity of the enzyme and binds the substrate succinate, while the binding sites for coenzyme A and phosphate are found in the alpha subunit. The polypeptide is Succinate--CoA ligase [ADP-forming] subunit beta (Chelativorans sp. (strain BNC1)).